Consider the following 362-residue polypeptide: uncharacterized protein (362 aa).

At Ala-2 the chain carries N-acetylalanine.

Belongs to the Gfo/Idh/MocA family. Homodimer.

This is an uncharacterized protein from Arabidopsis thaliana (Mouse-ear cress).